The following is a 119-amino-acid chain: Large ribosomal subunit protein uL22 (119 aa).

Belongs to the universal ribosomal protein uL22 family. As to quaternary structure, part of the 50S ribosomal subunit.

This protein binds specifically to 23S rRNA; its binding is stimulated by other ribosomal proteins, e.g. L4, L17, and L20. It is important during the early stages of 50S assembly. It makes multiple contacts with different domains of the 23S rRNA in the assembled 50S subunit and ribosome. Functionally, the globular domain of the protein is located near the polypeptide exit tunnel on the outside of the subunit, while an extended beta-hairpin is found that lines the wall of the exit tunnel in the center of the 70S ribosome. The chain is Large ribosomal subunit protein uL22 from Chlorobaculum tepidum (strain ATCC 49652 / DSM 12025 / NBRC 103806 / TLS) (Chlorobium tepidum).